The primary structure comprises 736 residues: ATP-dependent zinc metalloprotease FtsH (736 aa).

Disordered regions lie at residues 1 to 39 and 57 to 83; these read MDSNVDSQRVPDGQIFFRPVHPGISGKDMESGTSDGQQR and QQTQNRTGFASADTKQGSPEGADRKKM. Residues 1-87 are Cytoplasmic-facing; it reads MDSNVDSQRV…ADRKKMPPGK (87 aa). Over residues 57–73 the composition is skewed to polar residues; it reads QQTQNRTGFASADTKQG. Residues 88–108 traverse the membrane as a helical segment; the sequence is AWLWFVLILIVNFLMVRLLIP. The Periplasmic portion of the chain corresponds to 109 to 205; sequence DAEQPVMVPY…KPIHEERSPW (97 aa). The helical transmembrane segment at 206–226 threads the bilayer; it reads ATIVYSFGPGLLFIAFYIWLF. Residues 227 to 736 are Cytoplasmic-facing; sequence RRMAQQGGLG…VSLPGVAGPS (510 aa). 301–308 serves as a coordination point for ATP; sequence GAPGTGKT. Residue histidine 522 coordinates Zn(2+). Residue glutamate 523 is part of the active site. Zn(2+) is bound by residues histidine 526 and aspartate 598. The interval 706–736 is disordered; it reads PALDAGKLPVPDGGDKNAEPSVSLPGVAGPS.

In the central section; belongs to the AAA ATPase family. It in the C-terminal section; belongs to the peptidase M41 family. As to quaternary structure, homohexamer. The cofactor is Zn(2+).

The protein localises to the cell inner membrane. In terms of biological role, acts as a processive, ATP-dependent zinc metallopeptidase for both cytoplasmic and membrane proteins. Plays a role in the quality control of integral membrane proteins. The polypeptide is ATP-dependent zinc metalloprotease FtsH (Syntrophus aciditrophicus (strain SB)).